The primary structure comprises 244 residues: uncharacterized protein (244 aa).

Transmembrane regions (helical) follow at residues 20 to 42, 49 to 67, 82 to 101, and 108 to 125; these read TITAIAPIVMTFEPFFIFPVVLI, FVYILLPITAALILRATKV, TPSIAVFAVLLVATTIASVF, and AFLVAIVVISILHAATPI.

The protein resides in the cell membrane. This is an uncharacterized protein from Archaeoglobus fulgidus (strain ATCC 49558 / DSM 4304 / JCM 9628 / NBRC 100126 / VC-16).